Reading from the N-terminus, the 273-residue chain is MSMFTSTRTLTQTMDKPDDLTRSATETAVKLSNMNQRVSRFHDKMENEIEVRRVDDDTRVKMIKDAIAHLDRLIQTESRKRQASFEDIREEVKKSADNMYLTIKEEIDTMAANFRKSLAEMGDTLNNVETNLQNQIAIHNDAIAALRKEALKSLNDLETGIATENAERKKMYDQLNEKVAEGFARISAAIEKETIARERAVSAATTEALTNTKLVEKCVNEQLENVASEIRAIQEEIDREKAERKEAEDKIVNTLEDVVSKIQGGLSMVTKHQ.

The tract at residues 1–19 (MSMFTSTRTLTQTMDKPDD) is nonhelical region. The tract at residues 20–273 (LTRSATETAV…GGLSMVTKHQ (254 aa)) is rod. Coiled-coil stretches lie at residues 123 to 175 (DTLN…YDQL) and 211 to 263 (NTKL…SKIQ).

Belongs to the SF-assemblin family. In terms of assembly, interacts with BOP1 (via C-terminal WD repeats).

The protein resides in the cytoplasm. The protein localises to the cytoskeleton. Giardins are involved in parasite attachment to the intestinal mucosa and in the cytoskeletal disassembly and reassembly that marks the transition from infectious trophozoite to transmissible cyst. They may interact with other cytoskeletal proteins such as microtubules in the microribbons or crossbridges, to maintain the integrity of the ventral disk. The protein is Giardin subunit beta of Giardia intestinalis (Giardia lamblia).